A 408-amino-acid chain; its full sequence is LL-diaminopimelate aminotransferase (408 aa).

2 residues coordinate substrate: Tyr-15 and Gly-42. Residues Tyr-72, 108-109 (SK), Tyr-132, Asn-187, Tyr-218, and 246-248 (SFS) each bind pyridoxal 5'-phosphate. Substrate is bound by residues Lys-109, Tyr-132, and Asn-187. Lys-249 carries the post-translational modification N6-(pyridoxal phosphate)lysine. Arg-257 and Asn-292 together coordinate pyridoxal 5'-phosphate. Substrate-binding residues include Asn-292 and Arg-388.

The protein belongs to the class-I pyridoxal-phosphate-dependent aminotransferase family. LL-diaminopimelate aminotransferase subfamily. In terms of assembly, homodimer. Pyridoxal 5'-phosphate is required as a cofactor.

It carries out the reaction (2S,6S)-2,6-diaminopimelate + 2-oxoglutarate = (S)-2,3,4,5-tetrahydrodipicolinate + L-glutamate + H2O + H(+). It participates in amino-acid biosynthesis; L-lysine biosynthesis via DAP pathway; LL-2,6-diaminopimelate from (S)-tetrahydrodipicolinate (aminotransferase route): step 1/1. Functionally, involved in the synthesis of meso-diaminopimelate (m-DAP or DL-DAP), required for both lysine and peptidoglycan biosynthesis. Catalyzes the direct conversion of tetrahydrodipicolinate to LL-diaminopimelate. This is LL-diaminopimelate aminotransferase from Leptospira interrogans serogroup Icterohaemorrhagiae serovar Lai (strain 56601).